A 242-amino-acid polypeptide reads, in one-letter code: Probable 2-phosphosulfolactate phosphatase (242 aa).

Belongs to the ComB family. It depends on Mg(2+) as a cofactor.

It carries out the reaction (2R)-O-phospho-3-sulfolactate + H2O = (2R)-3-sulfolactate + phosphate. The polypeptide is Probable 2-phosphosulfolactate phosphatase (Prochlorococcus marinus (strain NATL2A)).